A 129-amino-acid chain; its full sequence is Large ribosomal subunit protein bL19c (129 aa).

This sequence belongs to the bacterial ribosomal protein bL19 family.

The protein localises to the plastid. The chain is Large ribosomal subunit protein bL19c from Prototheca wickerhamii.